The primary structure comprises 216 residues: Sugar transporter SWEET1 (216 aa).

A run of 7 helical transmembrane segments spans residues 3–23 (WMWL…SSGL), 36–56 (ENIQ…WFYY), 65–85 (LMIV…AYLL), 96–116 (QVLV…LWIL), 125–145 (LGLF…ADLA), 157–177 (SFPL…YGLV), and 181–201 (LYIT…FWLF). Residues 6-90 (LLSGACIVFT…GAYLLYSPER (85 aa)) form the MtN3/slv 1 domain. The 83-residue stretch at 124-206 (QLGLFCSVFT…RFWLFSQFPP (83 aa)) folds into the MtN3/slv 2 domain.

This sequence belongs to the SWEET sugar transporter family.

It localises to the golgi apparatus membrane. The protein resides in the cell membrane. Its function is as follows. Mediates sugar transport across membranes. In Xenopus laevis (African clawed frog), this protein is Sugar transporter SWEET1 (slc50a1).